A 406-amino-acid chain; its full sequence is Ribulose bisphosphate carboxylase large chain (406 aa).

Substrate-binding residues include asparagine 101 and threonine 151. The active-site Proton acceptor is lysine 153. Substrate is bound at residue lysine 155. Mg(2+)-binding residues include lysine 179, aspartate 181, and glutamate 182. Position 179 is an N6-carboxylysine (lysine 179). Histidine 272 functions as the Proton acceptor in the catalytic mechanism. Substrate contacts are provided by arginine 273, histidine 305, and serine 357.

Belongs to the RuBisCO large chain family. Type I subfamily. Heterohexadecamer of 8 large chains and 8 small chains; disulfide-linked. The disulfide link is formed within the large subunit homodimers. Mg(2+) serves as cofactor. The disulfide bond which can form in the large chain dimeric partners within the hexadecamer appears to be associated with oxidative stress and protein turnover.

It localises to the plastid. Its subcellular location is the chloroplast. It carries out the reaction 2 (2R)-3-phosphoglycerate + 2 H(+) = D-ribulose 1,5-bisphosphate + CO2 + H2O. It catalyses the reaction D-ribulose 1,5-bisphosphate + O2 = 2-phosphoglycolate + (2R)-3-phosphoglycerate + 2 H(+). In terms of biological role, ruBisCO catalyzes two reactions: the carboxylation of D-ribulose 1,5-bisphosphate, the primary event in carbon dioxide fixation, as well as the oxidative fragmentation of the pentose substrate in the photorespiration process. Both reactions occur simultaneously and in competition at the same active site. In Trichomanes striatum (Fern), this protein is Ribulose bisphosphate carboxylase large chain (rbcL).